A 2072-amino-acid chain; its full sequence is Protein still life, isoform SIF type 1 (2072 aa).

The N-myristoyl glycine moiety is linked to residue G2. The region spanning 29 to 147 is the WH1 domain; sequence RRDGHLLSSF…ECCSPSFKFS (119 aa). Disordered regions lie at residues 153-188, 245-284, 327-355, 459-486, 502-576, 618-655, and 699-747; these read SYSLKLDPPGKGKVKAKRKPLSTPASPSRVRQEPQC, DNVASGGPGTNQGADTLPRQMKGGQQDRQDVANSGVNTNT, EGTQAGGGLHQSVGTCTSSSKGTGTRNKD, NNTMGRASSQSSRFSGSRSSHEIGRGYP, EGSP…SPTS, AKSSTLPLPPHRPLSTIRDKERDRDRDGYYSDRNELIR, and SGSS…YKSA. Residues 275 to 284 are compositionally biased toward polar residues; that stretch reads VANSGVNTNT. Low complexity-rich tracts occupy residues 338-351, 459-476, and 522-553; these read SVGTCTSSSKGTGT, NNTMGRASSQSSRFSGSR, and SSSNGNSDQDQSYGQQQSSGQHPQQQQGPPQR. A compositionally biased stretch (polar residues) spans 564-576; sequence APNVTPTPGSPTS. Residues 634-655 show a composition bias toward basic and acidic residues; it reads IRDKERDRDRDGYYSDRNELIR. A compositionally biased stretch (polar residues) spans 732 to 743; sequence SLRQDSSLNDSG. One can recognise a PH domain in the interval 840-958; it reads TGAVRKAGFL…SIHSACAAAF (119 aa). A disordered region spans residues 1088–1119; the sequence is GRGATKRRPPMLSRSNSGSSRRSMQMNSRDEP. Residues 1100 to 1114 are compositionally biased toward low complexity; it reads SRSNSGSSRRSMQMN. Positions 1121-1188 constitute an RBD domain; it reads KTFKVAMPDN…PHRNDLIENY (68 aa). Residues 1204-1293 enclose the PDZ domain; sequence QVELQRTTLE…LSMMMRSSRT (90 aa). The interval 1403 to 1424 is disordered; it reads AEQETRKSSPTGSVTSSVSTTA. The span at 1410–1424 shows a compositional bias: low complexity; it reads SSPTGSVTSSVSTTA. Positions 1436 to 1630 constitute a DH domain; that stretch reads KLRKVVMELV…EKVAEHINEM (195 aa). Disordered regions lie at residues 1803–1832, 1844–2039, and 2051–2072; these read MKNFGGSSGSVSGHSSQGMGSMGYPGNSQT, HGSH…YQPV, and PRDMINLGTDPQSTTRKDDVKN. 2 stretches are compositionally biased toward low complexity: residues 1811–1821 and 1926–1943; these read GSVSGHSSQGM and QQQQQQQQQQQQLMQQGH. The span at 1970–1984 shows a compositional bias: basic and acidic residues; sequence HSSDIERIDPGTKSE. Positions 2007 to 2022 are enriched in low complexity; sequence LTLSTTSTLSVGSTGS. A compositionally biased stretch (polar residues) spans 2023–2032; it reads QARLIQSSHP.

In terms of tissue distribution, expressed in both larval and adult brains, mainly in a subset of neurons but not in glia. In the adult eye is expressed in the two primary pigment cells in the subapical region of the eye. Also present in photoreceptors.

It is found in the synapse. Regulates synaptic differentiation through the organization of actin cytoskeleton possibly by activating Rho-like GTPases. Is likely a factor in the cascade of Rac1 or Cdc42 in the neurons. May play a role in maintaining proper septate junction functions. Required for eye development and most likely affects corneal lens-formation. This chain is Protein still life, isoform SIF type 1 (sif), found in Drosophila melanogaster (Fruit fly).